The primary structure comprises 134 residues: Large ribosomal subunit protein uL16c (134 aa).

It belongs to the universal ribosomal protein uL16 family. As to quaternary structure, part of the 50S ribosomal subunit.

It is found in the plastid. The protein resides in the chloroplast. In Solanum lycopersicum (Tomato), this protein is Large ribosomal subunit protein uL16c.